A 285-amino-acid polypeptide reads, in one-letter code: Release factor glutamine methyltransferase (285 aa).

Residues 124–128, Asp-147, and Asn-190 each bind S-adenosyl-L-methionine; that span reads GTGSG. Residue 190 to 193 participates in substrate binding; that stretch reads NPPY.

The protein belongs to the protein N5-glutamine methyltransferase family. PrmC subfamily.

It carries out the reaction L-glutaminyl-[peptide chain release factor] + S-adenosyl-L-methionine = N(5)-methyl-L-glutaminyl-[peptide chain release factor] + S-adenosyl-L-homocysteine + H(+). Functionally, methylates the class 1 translation termination release factors RF1/PrfA and RF2/PrfB on the glutamine residue of the universally conserved GGQ motif. The protein is Release factor glutamine methyltransferase of Flavobacterium psychrophilum (strain ATCC 49511 / DSM 21280 / CIP 103535 / JIP02/86).